We begin with the raw amino-acid sequence, 104 residues long: Large ribosomal subunit protein uL24 (104 aa).

The protein belongs to the universal ribosomal protein uL24 family. Part of the 50S ribosomal subunit.

One of two assembly initiator proteins, it binds directly to the 5'-end of the 23S rRNA, where it nucleates assembly of the 50S subunit. Functionally, one of the proteins that surrounds the polypeptide exit tunnel on the outside of the subunit. This Idiomarina loihiensis (strain ATCC BAA-735 / DSM 15497 / L2-TR) protein is Large ribosomal subunit protein uL24.